The following is a 377-amino-acid chain: Succinyl-diaminopimelate desuccinylase (377 aa).

Residue His-66 participates in Zn(2+) binding. Asp-68 is a catalytic residue. Asp-99 provides a ligand contact to Zn(2+). Glu-133 functions as the Proton acceptor in the catalytic mechanism. Zn(2+)-binding residues include Glu-134, Glu-162, and His-348.

It belongs to the peptidase M20A family. DapE subfamily. As to quaternary structure, homodimer. Requires Zn(2+) as cofactor. Co(2+) is required as a cofactor.

The enzyme catalyses N-succinyl-(2S,6S)-2,6-diaminopimelate + H2O = (2S,6S)-2,6-diaminopimelate + succinate. It participates in amino-acid biosynthesis; L-lysine biosynthesis via DAP pathway; LL-2,6-diaminopimelate from (S)-tetrahydrodipicolinate (succinylase route): step 3/3. Functionally, catalyzes the hydrolysis of N-succinyl-L,L-diaminopimelic acid (SDAP), forming succinate and LL-2,6-diaminopimelate (DAP), an intermediate involved in the bacterial biosynthesis of lysine and meso-diaminopimelic acid, an essential component of bacterial cell walls. The polypeptide is Succinyl-diaminopimelate desuccinylase (Xylella fastidiosa (strain M12)).